The primary structure comprises 145 residues: Putative pre-16S rRNA nuclease (145 aa).

Belongs to the YqgF nuclease family.

It localises to the cytoplasm. In terms of biological role, could be a nuclease involved in processing of the 5'-end of pre-16S rRNA. In Sulfurihydrogenibium sp. (strain YO3AOP1), this protein is Putative pre-16S rRNA nuclease.